Consider the following 111-residue polypeptide: MAASFSVTRRFFDDKNYPRGFSRHGDYTIKESQVLEQYGQAFKALDLGEREPATKEEKDFVAFCRGERAAETFFEKTWNKYRTRINTKKRVYTLSSDVSEAASGGEDYSGE.

This sequence belongs to the MaoP family.

Functionally, involved in the organization of the Ori region of the chromosome into a macrodomain (MD). It constrains DNA mobility in the Ori macrodomain and limits long-distance DNA interactions with other chromosomal regions. The protein is Macrodomain Ori protein of Haemophilus influenzae (strain ATCC 51907 / DSM 11121 / KW20 / Rd).